A 506-amino-acid chain; its full sequence is Glycerol kinase (506 aa).

Thr-11 is a binding site for ADP. The ATP site is built by Thr-11, Ser-12, and Ser-13. Thr-11 is a sn-glycerol 3-phosphate binding site. An ADP-binding site is contributed by Arg-15. Arg-81, Glu-82, Tyr-133, and Asp-242 together coordinate sn-glycerol 3-phosphate. Positions 81, 82, 133, 242, and 243 each coordinate glycerol. ADP is bound by residues Thr-264 and Gly-316. Residues Thr-264, Gly-316, Gln-320, and Gly-421 each coordinate ATP. Positions 421 and 425 each coordinate ADP.

The protein belongs to the FGGY kinase family.

The catalysed reaction is glycerol + ATP = sn-glycerol 3-phosphate + ADP + H(+). It functions in the pathway polyol metabolism; glycerol degradation via glycerol kinase pathway; sn-glycerol 3-phosphate from glycerol: step 1/1. With respect to regulation, inhibited by fructose 1,6-bisphosphate (FBP). In terms of biological role, key enzyme in the regulation of glycerol uptake and metabolism. Catalyzes the phosphorylation of glycerol to yield sn-glycerol 3-phosphate. The sequence is that of Glycerol kinase from Paracidovorax citrulli (strain AAC00-1) (Acidovorax citrulli).